We begin with the raw amino-acid sequence, 394 residues long: Protein TsgA homolog (394 aa).

A run of 12 helical transmembrane segments spans residues 11-31, 51-71, 78-98, 101-121, 134-154, 162-182, 206-226, 250-270, 273-293, 297-317, 332-352, and 361-381; these read WISFFSYALTGALVIVTGMVM, FLNAGILISIFLNAWLMEIVP, FGFVLMVAAVAGLMVSHSIAL, VSMFVLGLVSGITMSIGTFLI, LLFTDSFFSMAGMIFPMVAAV, WYWVYACIGLVYVAIFVLTFG, IGVLFLSVAALCYILGQLGFI, FWMSYMFGMWAFSFILRFFDL, ILTVLAGLATVLMYLFINGAP, AWFILTLGFFSSAIYTSIITL, FVLTCGTIGTMLTFVVTGPIV, and LQTANGLYAVVFVMCLILGFV.

The protein belongs to the major facilitator superfamily. TsgA family.

The protein resides in the cell inner membrane. This Enterobacter sp. (strain 638) protein is Protein TsgA homolog.